Consider the following 35-residue polypeptide: Cecropin-B (35 aa).

Leu-35 is subject to Leucine amide.

It belongs to the cecropin family.

Its subcellular location is the secreted. Functionally, cecropins have lytic and antibacterial activity against several Gram-positive and Gram-negative bacteria. The protein is Cecropin-B of Antheraea pernyi (Chinese oak silk moth).